The following is a 395-amino-acid chain: HCLS1-binding protein 3 (395 aa).

Methionine 1 bears the N-acetylmethionine mark. At serine 3 the chain carries Phosphoserine. Residues 19–142 (GLDLSVPQHQ…EFLGTRAPGA (124 aa)) enclose the PX domain. Disordered regions lie at residues 143-310 (TGLA…KELF) and 322-374 (LGSE…AMDE). Over residues 162 to 174 (DSDEAFDFFEQQD) the composition is skewed to acidic residues. Serine 191 carries the phosphoserine modification. Over residues 194–206 (GEEEEEEEEEEVL) the composition is skewed to acidic residues. Composition is skewed to basic and acidic residues over residues 249–260 (SDKKVSETRRPL) and 299–310 (RPEHGDASKELF). Serine 254 carries the phosphoserine modification. A compositionally biased stretch (pro residues) spans 329-339 (KPQTKPKPLVP). An N6-acetyllysine modification is found at lysine 341.

As to quaternary structure, binds HCLS1. Interacts with the SH3 domain of HCLS1 in vitro. In terms of tissue distribution, ubiquitously expressed.

Its function is as follows. May be a modulator of IL-2 signaling. The chain is HCLS1-binding protein 3 (Hs1bp3) from Mus musculus (Mouse).